The following is a 697-amino-acid chain: UBA domain-containing protein 7 (697 aa).

The tract at residues 1–94 is disordered; the sequence is MDDLLDFNFY…STPKSSNYDP (94 aa). Residues 13–32 are compositionally biased toward low complexity; the sequence is STPSNQNNYSNNNSRTPSYS. The segment covering 62 to 77 has biased composition (basic and acidic residues); the sequence is KKTDNKISLKELERQK. Over residues 81-92 the composition is skewed to polar residues; the sequence is PDSNSTPKSSNY. The region spanning 181-221 is the UBA domain; that stretch reads KLSSNEMYEKLRDLGFSDDQSRLALENSGSLEDAIEYILEK. Residues 306–346 are disordered; the sequence is PEILPKTPIPKRKPHKVPMNEKVSEDRITTNQSRSGNDESS. The span at 323–333 shows a compositional bias: basic and acidic residues; that stretch reads PMNEKVSEDRI. The segment covering 334 to 345 has biased composition (polar residues); sequence TTNQSRSGNDES. Residues 412-445 form a TPR repeat; the sequence is VEEQQSTGNELFRKGDFSQAIEEFTNSLSQLPAK. Residues 547-573 are disordered; sequence ISSHSSESHSKRTTQQPKSTPNHTNIK. Residues 559–573 are compositionally biased toward polar residues; that stretch reads TTQQPKSTPNHTNIK. The region spanning 633 to 696 is the J domain; the sequence is CRWQKVSLSE…AWELFKQQND (64 aa).

The sequence is that of UBA domain-containing protein 7 (ucp7) from Schizosaccharomyces pombe (strain 972 / ATCC 24843) (Fission yeast).